We begin with the raw amino-acid sequence, 386 residues long: Succinate--CoA ligase [ADP-forming] subunit beta (386 aa).

The region spanning 9–244 (KEILRKYGVS…LDEEDPKEIE (236 aa)) is the ATP-grasp domain. Residues Lys-46, 53-55 (GRG), Glu-99, Cys-102, and Glu-107 each bind ATP. Mg(2+) contacts are provided by Asn-199 and Asp-213. Substrate contacts are provided by residues Asn-264 and 321–323 (GIM).

Belongs to the succinate/malate CoA ligase beta subunit family. In terms of assembly, heterotetramer of two alpha and two beta subunits. The cofactor is Mg(2+).

It carries out the reaction succinate + ATP + CoA = succinyl-CoA + ADP + phosphate. It catalyses the reaction GTP + succinate + CoA = succinyl-CoA + GDP + phosphate. It participates in carbohydrate metabolism; tricarboxylic acid cycle; succinate from succinyl-CoA (ligase route): step 1/1. Functionally, succinyl-CoA synthetase functions in the citric acid cycle (TCA), coupling the hydrolysis of succinyl-CoA to the synthesis of either ATP or GTP and thus represents the only step of substrate-level phosphorylation in the TCA. The beta subunit provides nucleotide specificity of the enzyme and binds the substrate succinate, while the binding sites for coenzyme A and phosphate are found in the alpha subunit. This is Succinate--CoA ligase [ADP-forming] subunit beta from Bacillus pumilus (strain SAFR-032).